A 122-amino-acid chain; its full sequence is Large ribosomal subunit protein uL14 (122 aa).

Belongs to the universal ribosomal protein uL14 family. In terms of assembly, part of the 50S ribosomal subunit. Forms a cluster with proteins L3 and L19. In the 70S ribosome, L14 and L19 interact and together make contacts with the 16S rRNA in bridges B5 and B8.

Binds to 23S rRNA. Forms part of two intersubunit bridges in the 70S ribosome. The sequence is that of Large ribosomal subunit protein uL14 from Bacillus cytotoxicus (strain DSM 22905 / CIP 110041 / 391-98 / NVH 391-98).